The chain runs to 680 residues: 1-deoxy-D-xylulose-5-phosphate synthase (680 aa).

Thiamine diphosphate is bound by residues H113 and 154-156; that span reads GHS. D185 is a Mg(2+) binding site. Residues 186–187, N214, F323, and E408 contribute to the thiamine diphosphate site; that span reads GA. Residue N214 coordinates Mg(2+).

This sequence belongs to the transketolase family. DXPS subfamily. As to quaternary structure, homodimer. Mg(2+) is required as a cofactor. The cofactor is thiamine diphosphate.

It carries out the reaction D-glyceraldehyde 3-phosphate + pyruvate + H(+) = 1-deoxy-D-xylulose 5-phosphate + CO2. It participates in metabolic intermediate biosynthesis; 1-deoxy-D-xylulose 5-phosphate biosynthesis; 1-deoxy-D-xylulose 5-phosphate from D-glyceraldehyde 3-phosphate and pyruvate: step 1/1. Functionally, catalyzes the acyloin condensation reaction between C atoms 2 and 3 of pyruvate and glyceraldehyde 3-phosphate to yield 1-deoxy-D-xylulose-5-phosphate (DXP). The protein is 1-deoxy-D-xylulose-5-phosphate synthase of Psychrobacter arcticus (strain DSM 17307 / VKM B-2377 / 273-4).